We begin with the raw amino-acid sequence, 151 residues long: Acidic phospholipase A2 5 (151 aa).

An N-terminal signal peptide occupies residues 1–27 (MYPAHLLVLLAVCVSLLGAASIPARPL). Cystine bridges form between Cys38–Cys104, Cys54–Cys151, Cys56–Cys72, Cys71–Cys132, Cys78–Cys125, Cys88–Cys118, and Cys111–Cys123. Ca(2+) is bound by residues Tyr55, Gly57, and Gly59. His75 is a catalytic residue. Asp76 contacts Ca(2+). Asp126 is an active-site residue.

It belongs to the phospholipase A2 family. Group I subfamily. D49 sub-subfamily. Ca(2+) is required as a cofactor. As to expression, expressed by the venom gland.

The protein resides in the secreted. It carries out the reaction a 1,2-diacyl-sn-glycero-3-phosphocholine + H2O = a 1-acyl-sn-glycero-3-phosphocholine + a fatty acid + H(+). In terms of biological role, PLA2 catalyzes the calcium-dependent hydrolysis of the 2-acyl groups in 3-sn-phosphoglycerides. The polypeptide is Acidic phospholipase A2 5 (Tropidechis carinatus (Australian rough-scaled snake)).